The primary structure comprises 162 residues: MLNQLENLTERVGGSNKLVDRWLDVRKHLLVAYYNLVGIKPGKESYMRLNEKALDNFCQSLVDYLSAGHFSIYERILHKLEGNGQLLHAAKIWPLLEDNTQRIMDYYDTSLETAIDHDNCLEFQQALSDIGEALEARFVLEDKLIMLVFDAMHDGARVKRPA.

It belongs to the Rsd/AlgQ family. As to quaternary structure, interacts with RpoD.

It localises to the cytoplasm. Its function is as follows. Binds RpoD and negatively regulates RpoD-mediated transcription activation by preventing the interaction between the primary sigma factor RpoD with the catalytic core of the RNA polymerase and with promoter DNA. May be involved in replacement of the RNA polymerase sigma subunit from RpoD to RpoS during the transition from exponential growth to the stationary phase. The protein is Regulator of sigma D of Salmonella choleraesuis (strain SC-B67).